Here is a 208-residue protein sequence, read N- to C-terminus: ATP-dependent Clp protease proteolytic subunit (208 aa).

Ser107 serves as the catalytic Nucleophile. Residue His132 is part of the active site.

This sequence belongs to the peptidase S14 family. As to quaternary structure, fourteen ClpP subunits assemble into 2 heptameric rings which stack back to back to give a disk-like structure with a central cavity, resembling the structure of eukaryotic proteasomes.

The protein localises to the cytoplasm. The enzyme catalyses Hydrolysis of proteins to small peptides in the presence of ATP and magnesium. alpha-casein is the usual test substrate. In the absence of ATP, only oligopeptides shorter than five residues are hydrolyzed (such as succinyl-Leu-Tyr-|-NHMec, and Leu-Tyr-Leu-|-Tyr-Trp, in which cleavage of the -Tyr-|-Leu- and -Tyr-|-Trp bonds also occurs).. Functionally, cleaves peptides in various proteins in a process that requires ATP hydrolysis. Has a chymotrypsin-like activity. Plays a major role in the degradation of misfolded proteins. The polypeptide is ATP-dependent Clp protease proteolytic subunit (Methylobacterium radiotolerans (strain ATCC 27329 / DSM 1819 / JCM 2831 / NBRC 15690 / NCIMB 10815 / 0-1)).